We begin with the raw amino-acid sequence, 330 residues long: Cytoplasmic envelopment protein 2 (330 aa).

It belongs to the herpesviridae cytoplasmic envelopment protein 2 family. In terms of assembly, interacts with cytoplasmic envelopment protein 3 and with the capsid.

It localises to the virion tegument. The protein resides in the host cytoplasm. It is found in the host nucleus. In terms of biological role, plays a critical role in cytoplasmic virus egress. Participates in the final step of tegumentation and envelope acquisition within the host cytoplasm by directly interacting with the capsid. Upon virion binding to target cell, a signaling cascade is triggered to disrupt the interaction with the capsid, thereby preparing capsid uncoating. The chain is Cytoplasmic envelopment protein 2 (33) from Saimiriine herpesvirus 2 (strain 11) (SaHV-2).